The following is a 69-amino-acid chain: Cytochrome c oxidase subunit 8A, mitochondrial (69 aa).

A mitochondrion-targeting transit peptide spans 1-25 (MSVLTSLLLRGLTGSARRLPVPRAK). The SIFI-degron motif lies at 2–19 (SVLTSLLLRGLTGSARRL). The Mitochondrial matrix portion of the chain corresponds to 26 to 36 (VHSMPPEEELG). A helical membrane pass occupies residues 37 to 60 (TLEKAIALTSCFVSLFLPAGWILS). At 61 to 69 (HLEDYKRPE) the chain is on the mitochondrial intermembrane side.

It belongs to the cytochrome c oxidase VIII family. As to quaternary structure, component of the cytochrome c oxidase (complex IV, CIV), a multisubunit enzyme composed of 14 subunits. The complex is composed of a catalytic core of 3 subunits MT-CO1, MT-CO2 and MT-CO3, encoded in the mitochondrial DNA, and 11 supernumerary subunits COX4I, COX5A, COX5B, COX6A, COX6B, COX6C, COX7A, COX7B, COX7C, COX8 and NDUFA4, which are encoded in the nuclear genome. The complex exists as a monomer or a dimer and forms supercomplexes (SCs) in the inner mitochondrial membrane with NADH-ubiquinone oxidoreductase (complex I, CI) and ubiquinol-cytochrome c oxidoreductase (cytochrome b-c1 complex, complex III, CIII), resulting in different assemblies (supercomplex SCI(1)III(2)IV(1) and megacomplex MCI(2)III(2)IV(2)). In terms of processing, in response to mitochondrial stress, the precursor protein is ubiquitinated by the SIFI complex in the cytoplasm before mitochondrial import, leading to its degradation. Within the SIFI complex, UBR4 initiates ubiquitin chain that are further elongated or branched by KCMF1.

Its subcellular location is the mitochondrion inner membrane. Its pathway is energy metabolism; oxidative phosphorylation. Functionally, component of the cytochrome c oxidase, the last enzyme in the mitochondrial electron transport chain which drives oxidative phosphorylation. The respiratory chain contains 3 multisubunit complexes succinate dehydrogenase (complex II, CII), ubiquinol-cytochrome c oxidoreductase (cytochrome b-c1 complex, complex III, CIII) and cytochrome c oxidase (complex IV, CIV), that cooperate to transfer electrons derived from NADH and succinate to molecular oxygen, creating an electrochemical gradient over the inner membrane that drives transmembrane transport and the ATP synthase. Cytochrome c oxidase is the component of the respiratory chain that catalyzes the reduction of oxygen to water. Electrons originating from reduced cytochrome c in the intermembrane space (IMS) are transferred via the dinuclear copper A center (CU(A)) of subunit 2 and heme A of subunit 1 to the active site in subunit 1, a binuclear center (BNC) formed by heme A3 and copper B (CU(B)). The BNC reduces molecular oxygen to 2 water molecules using 4 electrons from cytochrome c in the IMS and 4 protons from the mitochondrial matrix. The protein is Cytochrome c oxidase subunit 8A, mitochondrial (COX8A) of Papio anubis (Olive baboon).